We begin with the raw amino-acid sequence, 645 residues long: Meiosis induction protein kinase IME2/SME1 (645 aa).

The disordered stretch occupies residues 1–24 (MVEKRSRQSSSSGSEFSVPPDVDN). Low complexity predominate over residues 8–17 (QSSSSGSEFS). Residues 38-386 (YQLIEKLGAG…AQELCEMPFF (349 aa)) form the Protein kinase domain. ATP-binding positions include 44 to 52 (LGAGSFGCV) and lysine 67. Catalysis depends on aspartate 193, which acts as the Proton acceptor.

Belongs to the protein kinase superfamily. Ser/Thr protein kinase family.

The catalysed reaction is L-seryl-[protein] + ATP = O-phospho-L-seryl-[protein] + ADP + H(+). The enzyme catalyses L-threonyl-[protein] + ATP = O-phospho-L-threonyl-[protein] + ADP + H(+). Functionally, protein kinase which is essential for the initiation of meiosis and sporulation. This Saccharomyces cerevisiae (strain ATCC 204508 / S288c) (Baker's yeast) protein is Meiosis induction protein kinase IME2/SME1 (IME2).